We begin with the raw amino-acid sequence, 157 residues long: UPF0262 protein Atu0536 (157 aa).

The protein belongs to the UPF0262 family.

This is UPF0262 protein Atu0536 from Agrobacterium fabrum (strain C58 / ATCC 33970) (Agrobacterium tumefaciens (strain C58)).